We begin with the raw amino-acid sequence, 145 residues long: Bacilliredoxin MW1318 (145 aa).

The protein belongs to the bacilliredoxin family.

This is Bacilliredoxin MW1318 from Staphylococcus aureus (strain MW2).